The sequence spans 954 residues: Glycine dehydrogenase (decarboxylating) (954 aa).

K704 carries the post-translational modification N6-(pyridoxal phosphate)lysine.

The protein belongs to the GcvP family. In terms of assembly, the glycine cleavage system is composed of four proteins: P, T, L and H. Pyridoxal 5'-phosphate is required as a cofactor.

It catalyses the reaction N(6)-[(R)-lipoyl]-L-lysyl-[glycine-cleavage complex H protein] + glycine + H(+) = N(6)-[(R)-S(8)-aminomethyldihydrolipoyl]-L-lysyl-[glycine-cleavage complex H protein] + CO2. The glycine cleavage system catalyzes the degradation of glycine. The P protein binds the alpha-amino group of glycine through its pyridoxal phosphate cofactor; CO(2) is released and the remaining methylamine moiety is then transferred to the lipoamide cofactor of the H protein. The sequence is that of Glycine dehydrogenase (decarboxylating) from Sinorhizobium medicae (strain WSM419) (Ensifer medicae).